A 148-amino-acid chain; its full sequence is Cytochrome c-552 (148 aa).

Residues 1–17 (MKRTLMAFLLLGGLALA) form the signal peptide. Gln18 bears the Pyrrolidone carboxylic acid mark. Residues Cys28, Cys31, His32, and Met86 each coordinate heme c.

In terms of processing, binds 1 heme c group covalently per subunit.

In terms of biological role, this monoheme basic protein appears to function as an electron donor to cytochrome oxidase in T.thermophilus. The chain is Cytochrome c-552 (cycA) from Thermus thermophilus (strain ATCC 27634 / DSM 579 / HB8).